Consider the following 305-residue polypeptide: Chromatin modification-related protein png2 (305 aa).

The tract at residues 135-239 is disordered; sequence TVTPQTSERR…PLVKHDTLDS (105 aa). Residues 153-167 show a composition bias toward low complexity; it reads NQHSQQYSSQERSSS. Composition is skewed to polar residues over residues 168-183 and 195-210; these read YNNF…SYHT and KSSS…APQS. At Y181 the chain carries Phosphotyrosine. T183 is modified (phosphothreonine). Phosphoserine is present on residues S197 and S198. Basic and acidic residues predominate over residues 211 to 223; the sequence is TERRPVRRSESRL. The segment at 248-297 adopts a PHD-type zinc-finger fold; the sequence is QLYCYCQQVSYGQMIGCDNENCKREWFHLPCVGLVEPPKGIWYCKECEEL. C251, C253, C264, C269, H275, C278, C291, and C294 together coordinate Zn(2+).

It belongs to the ING family. As to quaternary structure, interacts with H3K4me3 and to a lesser extent with H3K4me2. Component of the clr6 histone deacetylase complex I'composed of at least clr6, png2, prw1, pst1 and sds3.

It localises to the cytoplasm. Its subcellular location is the nucleus. Its function is as follows. Component of the clr6 histone deacetylase complex I' responsible for the deacetylation of lysine residues on the N-terminal part of the core histones (H2A, H2B, H3 and H4). Histone deacetylation gives a tag for epigenetic repression and plays an important role in transcriptional regulation, cell cycle progression and developmental events. Has a role in silencing of mating type genes. The polypeptide is Chromatin modification-related protein png2 (png2) (Schizosaccharomyces pombe (strain 972 / ATCC 24843) (Fission yeast)).